The following is a 67-amino-acid chain: Large ribosomal subunit protein uL29 (67 aa).

This sequence belongs to the universal ribosomal protein uL29 family.

The sequence is that of Large ribosomal subunit protein uL29 from Clostridioides difficile (strain 630) (Peptoclostridium difficile).